We begin with the raw amino-acid sequence, 193 residues long: Ribosomal RNA large subunit methyltransferase E (193 aa).

Positions 49, 51, 69, 86, and 106 each coordinate S-adenosyl-L-methionine. The active-site Proton acceptor is the Lys146.

Belongs to the class I-like SAM-binding methyltransferase superfamily. RNA methyltransferase RlmE family.

It localises to the cytoplasm. The enzyme catalyses uridine(2552) in 23S rRNA + S-adenosyl-L-methionine = 2'-O-methyluridine(2552) in 23S rRNA + S-adenosyl-L-homocysteine + H(+). Functionally, specifically methylates the uridine in position 2552 of 23S rRNA at the 2'-O position of the ribose in the fully assembled 50S ribosomal subunit. This Brachyspira hyodysenteriae (strain ATCC 49526 / WA1) protein is Ribosomal RNA large subunit methyltransferase E.